A 466-amino-acid chain; its full sequence is MSHSYDYDAIVIGSGPGGEGAAMGLVKQGARVAVIERYHNVGGGCTHWGTIPSKALRHAVSRIIEFNQNPLYSDHSRLLRSSFADILNHADTVINQQTRMRQGFYERNHCEILQGDAHFVDEHTLALKCHDGSVETITAEKFVIACGSRPYHPDDVDFSHPRVYDSDSILSLHHEPRHVLIYGAGVIGCEYASIFRGMEVKVDLINTRDRLLAFLDQEMSDSLSYHFWNSGVVIRHNEEYERIEACDDGVIMHLKSGKKLKADCLLYANGRTGNTDSLALENIGLTTDSRGQLKVNSMYQTALPHIYAVGDVIGYPSLASAAYDQGRIAAQALVKGEATAHLIEDIPTGIYTIPEISSVGKTEQQLTSMKVPYEVGRAQFKHLARAQIVGMSVGTLKILFHRETKEILGIHCFGERAAEIIHIGQAIMEQKGGGNTIEYFVNTTFNYPTMAEAYRVAALNGLNRLF.

Residue 36 to 45 (ERYHNVGGGC) coordinates FAD.

It belongs to the class-I pyridine nucleotide-disulfide oxidoreductase family. Requires FAD as cofactor.

The protein resides in the cytoplasm. It catalyses the reaction NAD(+) + NADPH = NADH + NADP(+). Functionally, conversion of NADPH, generated by peripheral catabolic pathways, to NADH, which can enter the respiratory chain for energy generation. This is Soluble pyridine nucleotide transhydrogenase from Enterobacter sp. (strain 638).